The sequence spans 565 residues: Urocanate hydratase (565 aa).

NAD(+)-binding positions include 58 to 59, Gln-136, 182 to 184, Glu-202, Arg-207, 245 to 246, 266 to 270, 276 to 277, and Tyr-325; these read GG, GMG, NA, QTSAH, and YL. Cys-413 is an active-site residue. Gly-495 provides a ligand contact to NAD(+).

This sequence belongs to the urocanase family. It depends on NAD(+) as a cofactor.

The protein resides in the cytoplasm. The catalysed reaction is 4-imidazolone-5-propanoate = trans-urocanate + H2O. It functions in the pathway amino-acid degradation; L-histidine degradation into L-glutamate; N-formimidoyl-L-glutamate from L-histidine: step 2/3. In terms of biological role, catalyzes the conversion of urocanate to 4-imidazolone-5-propionate. The sequence is that of Urocanate hydratase from Vibrio vulnificus (strain CMCP6).